Reading from the N-terminus, the 603-residue chain is Bifunctional 3-dehydroquinate dehydratase/shikimate dehydrogenase, chloroplastic (603 aa).

The span at 1–10 (MAASSTNARL) shows a compositional bias: polar residues. The interval 1-22 (MAASSTNARLTNPPRLLSKPRL) is disordered. The transit peptide at 1–66 (MAASSTNARL…VVFSDQRRRR (66 aa)) directs the protein to the chloroplast. Positions 13 to 22 (PPRLLSKPRL) are enriched in low complexity. Residues 96–313 (ICAPVMADSI…QPTIKDLLDL (218 aa)) are 3-dehydroquinate dehydratase. Residues Glu-124, Arg-126, and Arg-155 each coordinate 3-dehydroshikimate. His-214 serves as the catalytic Proton acceptor; for 3-dehydroquinate dehydratase activity. 3-dehydroshikimate is bound by residues Lys-241, Arg-279, Ser-300, and Gln-304. Lys-241 functions as the Schiff-base intermediate with substrate; for 3-dehydroquinate dehydratase activity in the catalytic mechanism. Positions 328–558 (IIGKPVSHSK…VYTPRITRLL (231 aa)) are shikimate dehydrogenase. Shikimate contacts are provided by Ser-336, Ser-338, Thr-381, Lys-385, Asn-406, and Asp-423. Lys-385 serves as the catalytic For shikimate dehydrogenase activity. The active-site For shikimate dehydrogenase activity is Asp-423. The NADP(+) site is built by Ala-461, Gly-463, Ala-464, Asn-483, Thr-485, Arg-488, Met-525, and Ala-548. Tyr-550 is a binding site for shikimate. Gly-571 serves as a coordination point for NADP(+). Residues Gln-578 and Gln-582 each coordinate shikimate.

This sequence in the N-terminal section; belongs to the type-I 3-dehydroquinase family. In the C-terminal section; belongs to the shikimate dehydrogenase family. As to quaternary structure, monomer.

Its subcellular location is the plastid. The protein resides in the chloroplast. It catalyses the reaction 3-dehydroquinate = 3-dehydroshikimate + H2O. The enzyme catalyses shikimate + NADP(+) = 3-dehydroshikimate + NADPH + H(+). The protein operates within metabolic intermediate biosynthesis; chorismate biosynthesis; chorismate from D-erythrose 4-phosphate and phosphoenolpyruvate: step 3/7. It functions in the pathway metabolic intermediate biosynthesis; chorismate biosynthesis; chorismate from D-erythrose 4-phosphate and phosphoenolpyruvate: step 4/7. Its function is as follows. Bifunctional dehydroquinate dehydratase-shikimate dehydrogenase enzyme that catalyzes two steps in the chorismate biosynthesis pathway. The polypeptide is Bifunctional 3-dehydroquinate dehydratase/shikimate dehydrogenase, chloroplastic (Arabidopsis thaliana (Mouse-ear cress)).